A 475-amino-acid chain; its full sequence is tRNA modification GTPase MnmE (475 aa).

The (6S)-5-formyl-5,6,7,8-tetrahydrofolate site is built by arginine 24, glutamate 81, and lysine 124. The 178-residue stretch at 220-397 (GLSVVLAGQP…LRRELLRLVG (178 aa)) folds into the TrmE-type G domain. Asparagine 230 provides a ligand contact to K(+). Residues 230 to 235 (NVGKSS), 249 to 255 (TPIAGTT), 274 to 277 (DTAG), and 378 to 380 (SAR) each bind GTP. Residue serine 234 participates in Mg(2+) binding. Residues threonine 249, isoleucine 251, and threonine 254 each coordinate K(+). Threonine 255 provides a ligand contact to Mg(2+). Lysine 475 is a (6S)-5-formyl-5,6,7,8-tetrahydrofolate binding site.

This sequence belongs to the TRAFAC class TrmE-Era-EngA-EngB-Septin-like GTPase superfamily. TrmE GTPase family. In terms of assembly, homodimer. Heterotetramer of two MnmE and two MnmG subunits. K(+) is required as a cofactor.

Its subcellular location is the cytoplasm. In terms of biological role, exhibits a very high intrinsic GTPase hydrolysis rate. Involved in the addition of a carboxymethylaminomethyl (cmnm) group at the wobble position (U34) of certain tRNAs, forming tRNA-cmnm(5)s(2)U34. In Cupriavidus necator (strain ATCC 17699 / DSM 428 / KCTC 22496 / NCIMB 10442 / H16 / Stanier 337) (Ralstonia eutropha), this protein is tRNA modification GTPase MnmE.